Consider the following 202-residue polypeptide: Small ribosomal subunit protein uS4 (202 aa).

The interval 21-42 (LSRKSPRRAYPPGQHGQARRKR) is disordered. Residues 90-152 (MRLDNTVFRL…DRSRKLVETN (63 aa)) enclose the S4 RNA-binding domain.

This sequence belongs to the universal ribosomal protein uS4 family. As to quaternary structure, part of the 30S ribosomal subunit. Contacts protein S5. The interaction surface between S4 and S5 is involved in control of translational fidelity.

Its function is as follows. One of the primary rRNA binding proteins, it binds directly to 16S rRNA where it nucleates assembly of the body of the 30S subunit. With S5 and S12 plays an important role in translational accuracy. The protein is Small ribosomal subunit protein uS4 of Synechocystis sp. (strain ATCC 27184 / PCC 6803 / Kazusa).